Reading from the N-terminus, the 37-residue chain is Cytochrome b6-f complex subunit 5 (37 aa).

A helical transmembrane segment spans residues 5 to 25 (FLFGIVLGLIPITLAGLFVTA).

It belongs to the PetG family. As to quaternary structure, the 4 large subunits of the cytochrome b6-f complex are cytochrome b6, subunit IV (17 kDa polypeptide, PetD), cytochrome f and the Rieske protein, while the 4 small subunits are PetG, PetL, PetM and PetN. The complex functions as a dimer.

It localises to the plastid. It is found in the chloroplast thylakoid membrane. Functionally, component of the cytochrome b6-f complex, which mediates electron transfer between photosystem II (PSII) and photosystem I (PSI), cyclic electron flow around PSI, and state transitions. PetG is required for either the stability or assembly of the cytochrome b6-f complex. This is Cytochrome b6-f complex subunit 5 from Solanum lycopersicum (Tomato).